We begin with the raw amino-acid sequence, 126 residues long: L-alanine exporter AlaE (126 aa).

Residues 23–43 (FALVVYCFFTGMAIEILLSGM) traverse the membrane as a helical segment.

The protein belongs to the AlaE exporter family.

It localises to the cell inner membrane. Functionally, exports L-alanine. This chain is L-alanine exporter AlaE, found in Sodalis glossinidius (strain morsitans).